Consider the following 505-residue polypeptide: Glycerol kinase (505 aa).

Residue threonine 13 participates in ADP binding. Residues threonine 13, threonine 14, and serine 15 each coordinate ATP. Threonine 13 contributes to the sn-glycerol 3-phosphate binding site. Arginine 17 is an ADP binding site. Residues arginine 83, glutamate 84, tyrosine 135, and aspartate 247 each coordinate sn-glycerol 3-phosphate. Glycerol contacts are provided by arginine 83, glutamate 84, tyrosine 135, aspartate 247, and glutamine 248. The ADP site is built by threonine 269 and glycine 313. Residues threonine 269, glycine 313, glutamine 317, and glycine 414 each contribute to the ATP site. Residues glycine 414 and asparagine 418 each contribute to the ADP site.

This sequence belongs to the FGGY kinase family.

The enzyme catalyses glycerol + ATP = sn-glycerol 3-phosphate + ADP + H(+). It functions in the pathway polyol metabolism; glycerol degradation via glycerol kinase pathway; sn-glycerol 3-phosphate from glycerol: step 1/1. Inhibited by fructose 1,6-bisphosphate (FBP). Its function is as follows. Key enzyme in the regulation of glycerol uptake and metabolism. Catalyzes the phosphorylation of glycerol to yield sn-glycerol 3-phosphate. The protein is Glycerol kinase of Clavibacter michiganensis subsp. michiganensis (strain NCPPB 382).